The chain runs to 69 residues: Cytoinsectotoxin-2a (69 aa).

This sequence belongs to the cationic peptide 06 (cytoinsectotoxin) family. As to expression, expressed by the venom gland.

Its subcellular location is the secreted. In terms of biological role, insecticidal and antimicrobial peptide. Has insecticidal activity against larvae of flesh fly S.carnaria. Has antibacterial activity against Gram-positive bacterium B.subtilis B-501 (MIC=1.25 uM) and Gram-negative bacterium E.coli DH5alpha (MIC=2.5 uM). This is Cytoinsectotoxin-2a from Lachesana tarabaevi (Spider).